The following is a 109-amino-acid chain: Large ribosomal subunit protein uL23 (109 aa).

The protein belongs to the universal ribosomal protein uL23 family. In terms of assembly, part of the 50S ribosomal subunit. Contacts protein L29, and trigger factor when it is bound to the ribosome.

In terms of biological role, one of the early assembly proteins it binds 23S rRNA. One of the proteins that surrounds the polypeptide exit tunnel on the outside of the ribosome. Forms the main docking site for trigger factor binding to the ribosome. The polypeptide is Large ribosomal subunit protein uL23 (Prosthecochloris aestuarii (strain DSM 271 / SK 413)).